Reading from the N-terminus, the 61-residue chain is Small ribosomal subunit protein uS14 (61 aa).

The Zn(2+) site is built by C24, C27, C40, and C43.

This sequence belongs to the universal ribosomal protein uS14 family. Zinc-binding uS14 subfamily. As to quaternary structure, part of the 30S ribosomal subunit. Contacts proteins S3 and S10. The cofactor is Zn(2+).

Its function is as follows. Binds 16S rRNA, required for the assembly of 30S particles and may also be responsible for determining the conformation of the 16S rRNA at the A site. The protein is Small ribosomal subunit protein uS14 of Geotalea daltonii (strain DSM 22248 / JCM 15807 / FRC-32) (Geobacter daltonii).